Here is a 346-residue protein sequence, read N- to C-terminus: [LysW]-lysine/[LysW]-ornithine hydrolase (346 aa).

His68 is a binding site for Zn(2+). Asp70 is an active-site residue. Asp92 contributes to the Zn(2+) binding site. Glu122 (proton acceptor) is an active-site residue. Zn(2+) is bound by residues Glu123, Glu146, and His317.

Belongs to the peptidase M20A family. LysK subfamily. Zn(2+) is required as a cofactor. Requires Co(2+) as cofactor.

Its subcellular location is the cytoplasm. It carries out the reaction [amino-group carrier protein]-C-terminal-gamma-(L-lysyl)-L-glutamate + H2O = [amino-group carrier protein]-C-terminal-L-glutamate + L-lysine. The enzyme catalyses [amino-group carrier protein]-C-terminal-gamma-(L-ornithyl)-L-glutamate + H2O = [amino-group carrier protein]-C-terminal-L-glutamate + L-ornithine. Its pathway is amino-acid biosynthesis; L-lysine biosynthesis via AAA pathway; L-lysine from L-alpha-aminoadipate (Thermus route): step 5/5. It functions in the pathway amino-acid biosynthesis; L-arginine biosynthesis. Catalyzes the release of L-lysine from [LysW]-gamma-L-lysine and the release of L-ornithine from [LysW]-L-ornithine. The chain is [LysW]-lysine/[LysW]-ornithine hydrolase from Saccharolobus islandicus (strain Y.G.57.14 / Yellowstone #1) (Sulfolobus islandicus).